The following is a 513-amino-acid chain: ATP synthase subunit alpha (513 aa).

An ATP-binding site is contributed by 169 to 176 (GDRQTGKT).

It belongs to the ATPase alpha/beta chains family. As to quaternary structure, F-type ATPases have 2 components, CF(1) - the catalytic core - and CF(0) - the membrane proton channel. CF(1) has five subunits: alpha(3), beta(3), gamma(1), delta(1), epsilon(1). CF(0) has three main subunits: a(1), b(2) and c(9-12). The alpha and beta chains form an alternating ring which encloses part of the gamma chain. CF(1) is attached to CF(0) by a central stalk formed by the gamma and epsilon chains, while a peripheral stalk is formed by the delta and b chains.

It is found in the cell inner membrane. It carries out the reaction ATP + H2O + 4 H(+)(in) = ADP + phosphate + 5 H(+)(out). Its function is as follows. Produces ATP from ADP in the presence of a proton gradient across the membrane. The alpha chain is a regulatory subunit. The protein is ATP synthase subunit alpha of Actinobacillus pleuropneumoniae serotype 7 (strain AP76).